A 101-amino-acid polypeptide reads, in one-letter code: NAD(P)H-quinone oxidoreductase subunit 4L, chloroplastic (101 aa).

A run of 3 helical transmembrane segments spans residues 2–22 (MFEY…YGLI), 32–52 (MCLE…SDLF), and 61–81 (IFSI…PAIV).

Belongs to the complex I subunit 4L family. NDH is composed of at least 16 different subunits, 5 of which are encoded in the nucleus.

It is found in the plastid. Its subcellular location is the chloroplast thylakoid membrane. It catalyses the reaction a plastoquinone + NADH + (n+1) H(+)(in) = a plastoquinol + NAD(+) + n H(+)(out). It carries out the reaction a plastoquinone + NADPH + (n+1) H(+)(in) = a plastoquinol + NADP(+) + n H(+)(out). Its function is as follows. NDH shuttles electrons from NAD(P)H:plastoquinone, via FMN and iron-sulfur (Fe-S) centers, to quinones in the photosynthetic chain and possibly in a chloroplast respiratory chain. The immediate electron acceptor for the enzyme in this species is believed to be plastoquinone. Couples the redox reaction to proton translocation, and thus conserves the redox energy in a proton gradient. This chain is NAD(P)H-quinone oxidoreductase subunit 4L, chloroplastic, found in Amborella trichopoda.